The chain runs to 677 residues: Opioid growth factor receptor (677 aa).

Met-1 bears the N-acetylmethionine mark. Positions Met-1–Glu-29 are enriched in acidic residues. The segment at Met-1–Ser-63 is disordered. Residues Ser-54–Ser-63 show a composition bias toward polar residues. Residues Arg-267–Lys-283 carry the Bipartite nuclear localization signal motif. The disordered stretch occupies residues Phe-295–Val-407. 2 positions are modified to phosphoserine: Ser-299 and Ser-315. Composition is skewed to basic and acidic residues over residues Glu-305–Ala-323 and Gly-331–Pro-345. Residues Ser-349, Ser-361, Ser-378, Ser-382, Ser-403, and Ser-420 each carry the phosphoserine modification. A compositionally biased stretch (basic and acidic residues) spans Ser-361 to Pro-395. Polar residues predominate over residues Gln-421–Val-431. The disordered stretch occupies residues Gln-421–Pro-677. Residues Gly-466–Ala-476 show a composition bias toward low complexity. The residue at position 484 (Ser-484) is a Phosphoserine. 7 tandem repeats follow at residues Ser-517–Glu-536, Ser-537–Glu-556, Ser-557–Glu-576, Ser-577–Glu-596, Ser-597–Glu-616, Ser-617–Glu-636, and Ser-637–Lys-656. The 7 X 20 AA approximate tandem repeats of [ST]-P-S-E-T-P-G-P-[SR]-P-A-G-P-[AT]-[GR]-D-E-P-A-[EK] stretch occupies residues Ser-517 to Lys-656. Low complexity predominate over residues Gly-528 to Pro-538. 2 positions are modified to phosphoserine: Ser-537 and Ser-557. A phosphoserine mark is found at Ser-617 and Ser-637.

The protein belongs to the opioid growth factor receptor family. Highly expressed in the heart and liver, moderately in skeletal muscle and kidney and to a lesser extent in brain and pancreas. Expressed in fetal tissues including liver and kidney.

It is found in the cytoplasm. The protein localises to the nucleus. Functionally, receptor for opioid growth factor (OGF), also known as Met-enkephalin. Seems to be involved in growth regulation. The chain is Opioid growth factor receptor (OGFR) from Homo sapiens (Human).